A 211-amino-acid polypeptide reads, in one-letter code: UPF0329 protein ECU07_1880/ECU10_0020 (211 aa).

It belongs to the UPF0329 family.

This is UPF0329 protein ECU07_1880/ECU10_0020 from Encephalitozoon cuniculi (strain GB-M1) (Microsporidian parasite).